The following is a 372-amino-acid chain: 4-hydroxy-3-methylbut-2-en-1-yl diphosphate synthase (flavodoxin) (372 aa).

Residues cysteine 270, cysteine 273, cysteine 305, and glutamate 312 each coordinate [4Fe-4S] cluster.

Belongs to the IspG family. The cofactor is [4Fe-4S] cluster.

The enzyme catalyses (2E)-4-hydroxy-3-methylbut-2-enyl diphosphate + oxidized [flavodoxin] + H2O + 2 H(+) = 2-C-methyl-D-erythritol 2,4-cyclic diphosphate + reduced [flavodoxin]. The protein operates within isoprenoid biosynthesis; isopentenyl diphosphate biosynthesis via DXP pathway; isopentenyl diphosphate from 1-deoxy-D-xylulose 5-phosphate: step 5/6. In terms of biological role, converts 2C-methyl-D-erythritol 2,4-cyclodiphosphate (ME-2,4cPP) into 1-hydroxy-2-methyl-2-(E)-butenyl 4-diphosphate. This Vibrio vulnificus (strain CMCP6) protein is 4-hydroxy-3-methylbut-2-en-1-yl diphosphate synthase (flavodoxin).